The sequence spans 381 residues: Orotidine 5'-phosphate decarboxylase (381 aa).

Residues D42, 64–66, 99–108, Y333, and R352 each bind substrate; these read KTH and DRKFGDIGHT. K101 (proton donor) is an active-site residue. Residues 311–333 form a disordered region; sequence LPPEDEDQQTNGSVGGDGQGQQY.

It belongs to the OMP decarboxylase family.

The enzyme catalyses orotidine 5'-phosphate + H(+) = UMP + CO2. It participates in pyrimidine metabolism; UMP biosynthesis via de novo pathway; UMP from orotate: step 2/2. The chain is Orotidine 5'-phosphate decarboxylase (ura3) from Hypocrea jecorina (Trichoderma reesei).